A 692-amino-acid polypeptide reads, in one-letter code: Protein hook (692 aa).

The 118-residue stretch at Ser-6–Ala-123 folds into the Calponin-homology (CH) domain. The stretch at Glu-135–Thr-576 forms a coiled coil. Residues Ala-161–Val-180 form a disordered region.

The protein belongs to the hook family. Homodimer. Interacts with microtubules via its N-terminus.

The protein resides in the cytoplasm. It is found in the cytoskeleton. The protein localises to the endosome. It localises to the synapse. In terms of biological role, involved in endocytic trafficking by stabilizing organelles of the endocytic pathway. Probably acts as a cytoskeletal linker protein required to tether endosome vesicles to the cytoskeleton. Involved in modulation of endocytosis at stages required for down-regulation of membrane proteins that control synapse size. Not involved in synaptic vesicle recycling. Required in R7 cells for boss endocytosis into multivesicular bodies (MVBs). Has a role in regulating adult longevity. This Drosophila willistoni (Fruit fly) protein is Protein hook.